The following is a 153-amino-acid chain: MSVEELSKEQVQMLRKAFDMFDRDKKGYIHTNMVSTILRTLGQTFEENDLQQLIIEIDADGSGELEFDEFLTLTARFLVEEDTEAMQEELREAFRMYDKEGNGYIPTSALREILRALDDKLTEDELDEMIAEIDTDGSGTVDFDEFMEMMTGD.

EF-hand domains lie at 9-44 (EQVQ…LGQT), 45-80 (FEEN…FLVE), 85-120 (AMQE…LDDK), and 121-153 (LTED…MTGD). Asp58, Asp60, Ser62, Glu64, and Glu69 together coordinate Ca(2+). Ca(2+) contacts are provided by Asp134, Asp136, Ser138, Thr140, and Glu145.

This sequence belongs to the troponin C family.

Functionally, troponin is the central regulatory protein of striated muscle contraction. Tn consists of three components: Tn-I which is the inhibitor of actomyosin ATPase, Tn-T which contains the binding site for tropomyosin and Tn-C. The binding of calcium to Tn-C abolishes the inhibitory action of Tn on actin filaments. This Tyrophagus putrescentiae (Mold mite) protein is Troponin C.